The chain runs to 119 residues: MKKKYRIKKNDDFQKVFRRGKSFANRQFVVYTLKQEEASHFRIGLSVSKKIGNAVCRNRIKRYIRQSFHELESQINPENEYIIIARKPAANMDFHEVKKSLIHVLKVGRVLKQKPNNSK.

This sequence belongs to the RnpA family. In terms of assembly, consists of a catalytic RNA component (M1 or rnpB) and a protein subunit.

The catalysed reaction is Endonucleolytic cleavage of RNA, removing 5'-extranucleotides from tRNA precursor.. In terms of biological role, RNaseP catalyzes the removal of the 5'-leader sequence from pre-tRNA to produce the mature 5'-terminus. It can also cleave other RNA substrates such as 4.5S RNA. The protein component plays an auxiliary but essential role in vivo by binding to the 5'-leader sequence and broadening the substrate specificity of the ribozyme. This chain is Ribonuclease P protein component, found in Listeria innocua serovar 6a (strain ATCC BAA-680 / CLIP 11262).